A 65-amino-acid polypeptide reads, in one-letter code: Large ribosomal subunit protein bL35 (65 aa).

It belongs to the bacterial ribosomal protein bL35 family.

The sequence is that of Large ribosomal subunit protein bL35 from Thiobacillus denitrificans (strain ATCC 25259 / T1).